The primary structure comprises 466 residues: Fumarate hydratase class II (466 aa).

Substrate-binding positions include 99–101, 129–132, 139–141, and threonine 187; these read SGT, HPND, and SSN. The active-site Proton donor/acceptor is the histidine 188. Serine 318 is a catalytic residue. Residues serine 319 and 324–326 contribute to the substrate site; that span reads KVN.

The protein belongs to the class-II fumarase/aspartase family. Fumarase subfamily. In terms of assembly, homotetramer.

It localises to the cytoplasm. It carries out the reaction (S)-malate = fumarate + H2O. Its pathway is carbohydrate metabolism; tricarboxylic acid cycle; (S)-malate from fumarate: step 1/1. In terms of biological role, involved in the TCA cycle. Catalyzes the stereospecific interconversion of fumarate to L-malate. This Thermus thermophilus (strain ATCC BAA-163 / DSM 7039 / HB27) protein is Fumarate hydratase class II.